The primary structure comprises 235 residues: Ribonuclease P protein component 3 (235 aa).

This sequence belongs to the eukaryotic/archaeal RNase P protein component 3 family. Consists of a catalytic RNA component and at least 4-5 protein subunits.

The protein resides in the cytoplasm. The enzyme catalyses Endonucleolytic cleavage of RNA, removing 5'-extranucleotides from tRNA precursor.. In terms of biological role, part of ribonuclease P, a protein complex that generates mature tRNA molecules by cleaving their 5'-ends. This Haloarcula marismortui (strain ATCC 43049 / DSM 3752 / JCM 8966 / VKM B-1809) (Halobacterium marismortui) protein is Ribonuclease P protein component 3.